The following is a 345-amino-acid chain: tRNA N6-adenosine threonylcarbamoyltransferase (345 aa).

2 residues coordinate Fe cation: His-111 and His-115. Residues 134–138 (LVSGG), Asp-167, Gly-180, and Asn-277 contribute to the substrate site. Fe cation is bound at residue Asp-305.

Belongs to the KAE1 / TsaD family. Fe(2+) is required as a cofactor.

It localises to the cytoplasm. It catalyses the reaction L-threonylcarbamoyladenylate + adenosine(37) in tRNA = N(6)-L-threonylcarbamoyladenosine(37) in tRNA + AMP + H(+). Required for the formation of a threonylcarbamoyl group on adenosine at position 37 (t(6)A37) in tRNAs that read codons beginning with adenine. Is involved in the transfer of the threonylcarbamoyl moiety of threonylcarbamoyl-AMP (TC-AMP) to the N6 group of A37, together with TsaE and TsaB. TsaD likely plays a direct catalytic role in this reaction. The chain is tRNA N6-adenosine threonylcarbamoyltransferase from Laribacter hongkongensis (strain HLHK9).